The chain runs to 230 residues: Ethylene-responsive transcription factor ERF012 (230 aa).

Basic and acidic residues predominate over residues 1–17 (MVKQERKIQTSSTKKEM). The tract at residues 1-51 (MVKQERKIQTSSTKKEMPLSSSPSSSSSSSSSSSSSSCKNKNKKSKIKKYK) is disordered. The span at 20-39 (SSSPSSSSSSSSSSSSSSCK) shows a compositional bias: low complexity. Over residues 40-51 (NKNKKSKIKKYK) the composition is skewed to basic residues. Residues 49–106 (KYKGVRMRSWGSWVSEIRAPNQKTRIWLGSYSTAEAAARAYDVALLCLKGPQANLNFP) constitute a DNA-binding region (AP2/ERF).

This sequence belongs to the AP2/ERF transcription factor family. ERF subfamily. As to expression, expressed cotyledons, ovules and seeds of immature siliques.

The protein localises to the nucleus. In terms of biological role, transcriptional activator involved in the regulation of plant development and tolerance to abiotic stresses. Involved in salt and osmotic stress response pathways. May be regulated by the stress-related genes RD29A, RD22, DREB1A or P5CS during stress response. Binds to the GCC-box pathogenesis-related promoter element. May be involved in the regulation of gene expression by stress factors and by components of stress signal transduction pathways. The polypeptide is Ethylene-responsive transcription factor ERF012 (ERF012) (Arabidopsis thaliana (Mouse-ear cress)).